Reading from the N-terminus, the 93-residue chain is Putative membrane protein insertion efficiency factor (93 aa).

Belongs to the UPF0161 family.

The protein resides in the cell inner membrane. Functionally, could be involved in insertion of integral membrane proteins into the membrane. The protein is Putative membrane protein insertion efficiency factor of Cupriavidus taiwanensis (strain DSM 17343 / BCRC 17206 / CCUG 44338 / CIP 107171 / LMG 19424 / R1) (Ralstonia taiwanensis (strain LMG 19424)).